A 1043-amino-acid chain; its full sequence is Ras guanine nucleotide exchange factor S (1043 aa).

The stretch at Ile-109 to Leu-142 forms a coiled coil. 4 stretches are compositionally biased toward low complexity: residues Gln-135–Ile-145, Leu-245–Ser-258, Ser-266–Ser-281, and Asn-293–Ser-307. Disordered regions lie at residues Gln-135–Ile-160 and Leu-245–Gln-316. Residues Leu-404–Glu-434 adopt a coiled-coil conformation. Positions Lys-645–Ile-768 constitute an N-terminal Ras-GEF domain. In terms of domain architecture, Ras-GEF spans Ser-803–Lys-1043.

Promotes the exchange of Ras-bound GDP by GTP. The protein is Ras guanine nucleotide exchange factor S (gefS) of Dictyostelium discoideum (Social amoeba).